A 391-amino-acid chain; its full sequence is Glycerol-3-phosphate dehydrogenase [NAD(+)] (391 aa).

Residues 46 to 51 (GSGNWG), Phe-78, and Phe-134 each bind NAD(+). Lys-157 provides a ligand contact to substrate. Ala-190 lines the NAD(+) pocket. Lys-250 serves as the catalytic Proton acceptor. Residues Arg-315 and Gln-344 each contribute to the NAD(+) site. 315 to 316 (RN) is a substrate binding site.

The protein belongs to the NAD-dependent glycerol-3-phosphate dehydrogenase family.

It carries out the reaction sn-glycerol 3-phosphate + NAD(+) = dihydroxyacetone phosphate + NADH + H(+). This Candida tropicalis (Yeast) protein is Glycerol-3-phosphate dehydrogenase [NAD(+)] (GPD).